The following is a 434-amino-acid chain: Nicotinate phosphoribosyltransferase (434 aa).

His242 bears the Phosphohistidine; by autocatalysis mark.

It belongs to the NAPRTase family. Post-translationally, transiently phosphorylated on a His residue during the reaction cycle. Phosphorylation strongly increases the affinity for substrates and increases the rate of nicotinate D-ribonucleotide production. Dephosphorylation regenerates the low-affinity form of the enzyme, leading to product release.

The catalysed reaction is nicotinate + 5-phospho-alpha-D-ribose 1-diphosphate + ATP + H2O = nicotinate beta-D-ribonucleotide + ADP + phosphate + diphosphate. The protein operates within cofactor biosynthesis; NAD(+) biosynthesis; nicotinate D-ribonucleotide from nicotinate: step 1/1. Functionally, catalyzes the synthesis of beta-nicotinate D-ribonucleotide from nicotinate and 5-phospho-D-ribose 1-phosphate at the expense of ATP. This chain is Nicotinate phosphoribosyltransferase, found in Bradyrhizobium sp. (strain BTAi1 / ATCC BAA-1182).